A 1083-amino-acid polypeptide reads, in one-letter code: MNETTTKQPLKKRSLSSYLSNVSTRREELEKISKQETSEEEDTAGKHEQRETLSEEVSDKFPENVASFRSQTTSVHQATQNNLNAKESEDLAHKNDASSHEGEVNGDSRPDDVPETNEKISQAIRAKISSSSSSPNVRNVDIQNHQPFSRDQLRAMLKEPKRKTVDDFIEEEGLGAVEEEDLSDEVLEKNTTEPENVEKDIEYSDSDKDTDDVGSDDPTAPNSPIKLGRRKLVRGDQLDATTSSMFNNESDSELSDIDDSKNIALSSSLFRGGSSPVKETNNNLSNMNSSPAQNPKRGSVSRSNDSNKSSHIAVSKRPKQKKGIYRDSGGRTRLQIACDKGKYDVVKKMIEEGGYDINDQDNAGNTALHEAALQGHIEIVELLIENGADVNIKSIEMFGDTPLIDASANGHLDVVKYLLKNGADPTIRNAKGLTAFESVDDESEFDDEEDQKILREIKKRLSIAAKKWTNRAGIHNDKSKNGNNAHTIDQPPFDNTTKAKNEKAADSPSMASNIDEKAPEEEFYWTDVTSRAGKEKLFKASKEGHLPYVGTYVENGGKIDLRSFFESVKCGHEDITSIFLAFGFPVNQTSRDNKTSALMVAVGRGHLGTVKLLLEAGADPTKRDKKGRTALYYAKNSIMGITNSEEIQLIENAINNYLKKHSEDNNDDDDDDDNNNETYKHEKKREKTQSPILASRRSATPRIEDEEDDTRMLNLADDDFNNDRDVKESTTSDSRKRLDDNENVGTQYSLDWKKRKTNALQDEEKLKSISPLSMEPHSPKKAKSVEISKIHEETAAEREARLKEEEEYRKKRLEKKRKKEQELLQKLAEDEKKRIEEQEKQKVLEMERLEKATLEKARKMEREKEMEEISYRRAVRDLYPLGLKIINFNDKLDYKRFLPLYYFVDEKNDKFVLDLQVMILLKDIDLLSKDNQPTSEKIPVDPSHLTPLWNMLKFIFLYGGSYDDKKNNMENKRYVVNFDGVDLDTKIGYELLEYKKFVSLPMAWIKWDNVVIENHAKRKEIEGNMIQISINEFARWRNDKLNKAQQPTRKQRSLKIPRELPVKFQHRMSISSVLQQTSKEPFW.

2 disordered regions span residues 1 to 233 and 267 to 328; these read MNET…RKLV and SSLF…YRDS. Phosphoserine is present on residues Ser-14 and Ser-16. Positions 24 to 62 are enriched in basic and acidic residues; the sequence is TRREELEKISKQETSEEEDTAGKHEQRETLSEEVSDKFP. Thr-37 bears the Phosphothreonine mark. The residue at position 67 (Ser-67) is a Phosphoserine. Polar residues predominate over residues 67-85; it reads SFRSQTTSVHQATQNNLNA. Residues 86 to 118 show a composition bias toward basic and acidic residues; it reads KESEDLAHKNDASSHEGEVNGDSRPDDVPETNE. Positions 135–149 are enriched in polar residues; the sequence is PNVRNVDIQNHQPFS. Positions 151–166 are enriched in basic and acidic residues; that stretch reads DQLRAMLKEPKRKTVD. A compositionally biased stretch (acidic residues) spans 167–185; that stretch reads DFIEEEGLGAVEEEDLSDE. Over residues 186–207 the composition is skewed to basic and acidic residues; that stretch reads VLEKNTTEPENVEKDIEYSDSD. The span at 277–293 shows a compositional bias: polar residues; the sequence is VKETNNNLSNMNSSPAQ. The residue at position 290 (Ser-290) is a Phosphoserine. The segment covering 300–310 has biased composition (low complexity); that stretch reads VSRSNDSNKSS. The segment covering 314 to 323 has biased composition (basic residues); the sequence is VSKRPKQKKG. ANK repeat units follow at residues 329–359, 363–392, and 398–427; these read GGRTRLQIACDKGKYDVVKKMIEEGGYDIND, AGNTALHEAALQGHIEIVELLIENGADVNI, and FGDTPLIDASANGHLDVVKYLLKNGADPTI. Residues 472-516 are disordered; the sequence is AGIHNDKSKNGNNAHTIDQPPFDNTTKAKNEKAADSPSMASNIDE. Over residues 481–496 the composition is skewed to polar residues; the sequence is NGNNAHTIDQPPFDNT. Residue Ser-507 is modified to Phosphoserine. 2 ANK repeats span residues 532 to 561 and 593 to 622; these read AGKEKLFKASKEGHLPYVGTYVENGGKIDL and NKTSALMVAVGRGHLGTVKLLLEAGADPTK. Disordered stretches follow at residues 661 to 742 and 762 to 790; these read HSED…DDNE and DEEKLKSISPLSMEPHSPKKAKSVEISKI. Acidic residues predominate over residues 665–675; it reads NNDDDDDDDNN. Ser-698 bears the Phosphoserine mark. Thr-700 bears the Phosphothreonine mark. A compositionally biased stretch (basic and acidic residues) spans 721 to 740; sequence NNDRDVKESTTSDSRKRLDD. Phosphoserine is present on Ser-778.

Identified in the Set3C complex with HOS2, HST1, SNT1, SIF2, CPR1 and SET3.

Its function is as follows. Unknown. Component of the Set3C complex, which is required to repress early/middle sporulation genes during meiosis. The sequence is that of Protein HOS4 (HOS4) from Saccharomyces cerevisiae (strain ATCC 204508 / S288c) (Baker's yeast).